Reading from the N-terminus, the 335-residue chain is Cathepsin B-like cysteine proteinase 4 (335 aa).

A signal peptide spans 1–15; sequence MKYLILAALVAVTAG. A propeptide spanning residues 16–80 is cleaved from the precursor; sequence LVIPLVPKTQ…VVKHDINEDT (65 aa). 6 disulfides stabilise this stretch: Cys-94–Cys-123, Cys-106–Cys-150, Cys-142–Cys-209, Cys-143–Cys-146, Cys-179–Cys-213, and Cys-187–Cys-199. Cys-109 is a catalytic residue. The N-linked (GlcNAc...) asparagine glycan is linked to Asn-193. Catalysis depends on residues His-281 and Asn-301.

Belongs to the peptidase C1 family.

It localises to the secreted. In terms of biological role, thiol protease which shows activity against the fluorogenic substrate z-Arg-Arg-AMC. This chain is Cathepsin B-like cysteine proteinase 4 (cpr-4), found in Caenorhabditis elegans.